The sequence spans 281 residues: Endochitinase At2g43610 (281 aa).

A signal peptide spans 1–28 (MATQNAILKKALIIFLFTLTIMTGTAFS). In terms of domain architecture, Chitin-binding type-1 spans 29–66 (QNCGTNGCKGNMCCSRWGYCGTTKAYCGTGCQSGPCNS). Cystine bridges form between Cys-31/Cys-42, Cys-36/Cys-48, Cys-41/Cys-55, and Cys-59/Cys-64. Positions 86 to 281 (GTIASVITPA…GVTPGTNLSC (196 aa)) are catalytic. Residue Glu-148 is the Proton donor of the active site. Asn-278 carries N-linked (GlcNAc...) asparagine glycosylation.

This sequence belongs to the glycosyl hydrolase 19 family. Chitinase class I subfamily.

The enzyme catalyses Random endo-hydrolysis of N-acetyl-beta-D-glucosaminide (1-&gt;4)-beta-linkages in chitin and chitodextrins.. The protein is Endochitinase At2g43610 of Arabidopsis thaliana (Mouse-ear cress).